A 307-amino-acid chain; its full sequence is UDP-N-acetylenolpyruvoylglucosamine reductase (307 aa).

In terms of domain architecture, FAD-binding PCMH-type spans 33–198; sequence KVGGPADIFV…LNATFALQKG (166 aa). The active site involves Arg-177. Ser-227 functions as the Proton donor in the catalytic mechanism. Glu-297 is a catalytic residue.

Belongs to the MurB family. Requires FAD as cofactor.

It localises to the cytoplasm. The catalysed reaction is UDP-N-acetyl-alpha-D-muramate + NADP(+) = UDP-N-acetyl-3-O-(1-carboxyvinyl)-alpha-D-glucosamine + NADPH + H(+). The protein operates within cell wall biogenesis; peptidoglycan biosynthesis. In terms of biological role, cell wall formation. This is UDP-N-acetylenolpyruvoylglucosamine reductase from Clostridium novyi (strain NT).